Consider the following 739-residue polypeptide: DEAD-box ATP-dependent RNA helicase 32 (739 aa).

The Q motif signature appears at 71–99 (RKFAQLPISDKTKRGLKDAKYVDMTDVQS). Positions 102 to 277 (IPHALCGRDI…RLSLRDPEYI (176 aa)) constitute a Helicase ATP-binding domain. An ATP-binding site is contributed by 115–122 (ARTGSGKT). The DEAD box signature appears at 225–228 (DEAD). The region spanning 303-461 (KLDMLWSFIK…EVSRLLAALL (159 aa)) is the Helicase C-terminal domain. Positions 643–689 (GAEMRKADIEDKKVDKERRREKRMKQKIKRKRGAMEDEEEEEEEDHD) form a coiled coil. Residues 656-725 (VDKERRREKR…GGKINTDSLS (70 aa)) form a disordered region. The segment covering 661-674 (RREKRMKQKIKRKR) has biased composition (basic residues). Residues 678-688 (EDEEEEEEEDH) are compositionally biased toward acidic residues.

This sequence belongs to the DEAD box helicase family. DDX10/DBP4 subfamily.

The catalysed reaction is ATP + H2O = ADP + phosphate + H(+). This is DEAD-box ATP-dependent RNA helicase 32 (RH32) from Arabidopsis thaliana (Mouse-ear cress).